Reading from the N-terminus, the 632-residue chain is 2-hydroxyacyl-CoA lyase 2 (632 aa).

A helical membrane pass occupies residues 13–33 (FFPSFLLLAFGTLVAAVLGVA). Glu-98 contacts thiamine diphosphate. Ser-369 carries the post-translational modification Phosphoserine. The tract at residues 470–550 (DFVATAAYLV…VIALVGNDAG (81 aa)) is thiamine pyrophosphate binding. Positions 521 and 547 each coordinate Mg(2+).

The protein belongs to the TPP enzyme family. The cofactor is Mg(2+). It depends on thiamine diphosphate as a cofactor.

It is found in the endoplasmic reticulum membrane. The catalysed reaction is 2-hydroxyoctadecanoyl-CoA = heptadecanal + formyl-CoA. The enzyme catalyses (2R)-hydroxyhexadecanoyl-CoA = pentadecanal + formyl-CoA. Endoplasmic reticulum 2-OH acyl-CoA lyase involved in the cleavage (C1 removal) reaction in the fatty acid alpha-oxydation in a thiamine pyrophosphate (TPP)-dependent manner. Involved in the phytosphingosine degradation pathway. The protein is 2-hydroxyacyl-CoA lyase 2 (Ilvbl) of Mus musculus (Mouse).